Reading from the N-terminus, the 903-residue chain is Centrobin (903 aa).

Residues 1-10 (MATSADSPSS) show a composition bias toward polar residues. Positions 1-34 (MATSADSPSSPLGAEDLLSDSSEPPGLNQVSSEV) are disordered. Position 80 is a phosphoserine (S80). 6 disordered regions span residues 110-140 (LQTS…DSDS), 471-493 (LRQA…GQHQ), 568-597 (LSTT…KEER), 669-704 (SALG…LPPA), 772-799 (RVPE…DGLT), and 837-903 (SGTD…GVWR). Residues 196–560 (RRKHCERHIQ…ERLQAMLQAH (365 aa)) adopt a coiled-coil conformation. Residues 365 to 903 (QEHQLKEHYQ…SMRSRGGVWR (539 aa)) are required for centrosome localization. The span at 572 to 590 (LPPPNPPAPPAGPSSPGPQ) shows a compositional bias: pro residues. A compositionally biased stretch (basic and acidic residues) spans 675-685 (HPDHRAERPFP). A compositionally biased stretch (low complexity) spans 778-791 (SSHSQGSGPSSGSP). Position 790 is a phosphoserine (S790). Residues 837–863 (SGTDGRGDNVPRRNTDSRLGEIPRKEI) show a composition bias toward basic and acidic residues.

Interacts with LYST. In terms of tissue distribution, widely expressed (at protein level). Highly expressed in testis. Also expressed in spleen, thymus, prostate, small intestine, colon and peripheral blood leukocytes.

It localises to the cytoplasm. It is found in the cytoskeleton. The protein resides in the microtubule organizing center. The protein localises to the centrosome. Its subcellular location is the centriole. Functionally, required for centriole duplication. Inhibition of centriole duplication leading to defects in cytokinesis. This chain is Centrobin (CNTROB), found in Homo sapiens (Human).